The primary structure comprises 214 residues: Adenylate kinase (214 aa).

Position 10–15 (10–15 (GAGKGT)) interacts with ATP. The tract at residues 30–59 (STGDMLRAAIKAGTELGKQAKSVIDAGQLV) is NMP. Residues Thr31, Arg36, 57-59 (QLV), 85-88 (GFPR), and Gln92 each bind AMP. The LID stretch occupies residues 122-159 (GRRAHLPSGRTYHNVYNPPKEEGKDDITGEELVVRDDD). ATP is bound by residues Arg123 and 132–133 (TY). AMP-binding residues include Arg156 and Arg167. Lys200 is a binding site for ATP.

The protein belongs to the adenylate kinase family. As to quaternary structure, monomer.

It localises to the cytoplasm. It carries out the reaction AMP + ATP = 2 ADP. It participates in purine metabolism; AMP biosynthesis via salvage pathway; AMP from ADP: step 1/1. Catalyzes the reversible transfer of the terminal phosphate group between ATP and AMP. Plays an important role in cellular energy homeostasis and in adenine nucleotide metabolism. The chain is Adenylate kinase from Vibrio atlanticus (strain LGP32) (Vibrio splendidus (strain Mel32)).